A 352-amino-acid chain; its full sequence is Biotin synthase (352 aa).

A Radical SAM core domain is found at 44 to 262 (NRVQVSTLLS…LAVARIMMPK (219 aa)). [4Fe-4S] cluster contacts are provided by C59, C63, and C66. [2Fe-2S] cluster is bound by residues C103, C134, C194, and R266.

It belongs to the radical SAM superfamily. Biotin synthase family. In terms of assembly, homodimer. The cofactor is [4Fe-4S] cluster. Requires [2Fe-2S] cluster as cofactor.

The catalysed reaction is (4R,5S)-dethiobiotin + (sulfur carrier)-SH + 2 reduced [2Fe-2S]-[ferredoxin] + 2 S-adenosyl-L-methionine = (sulfur carrier)-H + biotin + 2 5'-deoxyadenosine + 2 L-methionine + 2 oxidized [2Fe-2S]-[ferredoxin]. The protein operates within cofactor biosynthesis; biotin biosynthesis; biotin from 7,8-diaminononanoate: step 2/2. Catalyzes the conversion of dethiobiotin (DTB) to biotin by the insertion of a sulfur atom into dethiobiotin via a radical-based mechanism. This Pseudomonas aeruginosa (strain LESB58) protein is Biotin synthase.